Reading from the N-terminus, the 154-residue chain is Large ribosomal subunit protein uL22c (154 aa).

It belongs to the universal ribosomal protein uL22 family. In terms of assembly, part of the 50S ribosomal subunit.

The protein localises to the plastid. Its subcellular location is the chloroplast. In terms of biological role, this protein binds specifically to 23S rRNA. Its function is as follows. The globular domain of the protein is located near the polypeptide exit tunnel on the outside of the subunit, while an extended beta-hairpin is found that lines the wall of the exit tunnel in the center of the 70S ribosome. In Jasminum nudiflorum (Winter jasmine), this protein is Large ribosomal subunit protein uL22c (rpl22).